Consider the following 164-residue polypeptide: Peptide methionine sulfoxide reductase MsrA (164 aa).

Cysteine 16 is a catalytic residue.

The protein belongs to the MsrA Met sulfoxide reductase family.

It carries out the reaction L-methionyl-[protein] + [thioredoxin]-disulfide + H2O = L-methionyl-(S)-S-oxide-[protein] + [thioredoxin]-dithiol. The catalysed reaction is [thioredoxin]-disulfide + L-methionine + H2O = L-methionine (S)-S-oxide + [thioredoxin]-dithiol. Its function is as follows. Has an important function as a repair enzyme for proteins that have been inactivated by oxidation. Catalyzes the reversible oxidation-reduction of methionine sulfoxide in proteins to methionine. The protein is Peptide methionine sulfoxide reductase MsrA of Clostridium tetani (strain Massachusetts / E88).